The following is a 146-amino-acid chain: Protein JTB (146 aa).

A signal peptide spans 1-30 (MLAGAGRPGLPQGRHLCWLLCAFTLKLCQA). Residues 31-105 (EAPVQEEKLS…CRSALMEQRL (75 aa)) are Extracellular-facing. The chain crosses the membrane as a helical span at residues 106–126 (FWKFEGAVVCVALIFACLVII). Topologically, residues 127–146 (RQRQLDRKALEKVRKQIESI) are cytoplasmic.

The protein belongs to the JTB family. In terms of assembly, interacts with AURKA, AURKB, BIRC5 and INCENP. May be a component of the CPC at least composed of BIRC5/survivin, CDCA8/borealin, INCENP and AURKB/Aurora-B. In terms of tissue distribution, ubiquitous. Expressed in all normal human tissues studied but overexpressed or underexpressed in many of their malignant counterparts.

The protein resides in the membrane. The protein localises to the mitochondrion. It is found in the cytoplasm. It localises to the cytoskeleton. Its subcellular location is the microtubule organizing center. The protein resides in the centrosome. The protein localises to the spindle. Its function is as follows. Required for normal cytokinesis during mitosis. Plays a role in the regulation of cell proliferation. May be a component of the chromosomal passenger complex (CPC), a complex that acts as a key regulator of mitosis. The CPC complex has essential functions at the centromere in ensuring correct chromosome alignment and segregation and is required for chromatin-induced microtubule stabilization and spindle assembly. Increases AURKB activity. Inhibits apoptosis induced by TGFB1. Overexpression induces swelling of mitochondria and reduces mitochondrial membrane potential. The chain is Protein JTB (JTB) from Homo sapiens (Human).